Consider the following 595-residue polypeptide: Aspartate--tRNA ligase (595 aa).

An L-aspartate-binding site is contributed by glutamate 173. An aspartate region spans residues 197 to 200 (QLFK). Arginine 219 contacts L-aspartate. ATP is bound by residues 219–221 (RDE) and glutamine 228. Histidine 449 is a binding site for L-aspartate. Glutamate 483 contacts ATP. Arginine 490 serves as a coordination point for L-aspartate. 535–538 (GLDR) lines the ATP pocket.

The protein belongs to the class-II aminoacyl-tRNA synthetase family. Type 1 subfamily. Homodimer.

Its subcellular location is the cytoplasm. It catalyses the reaction tRNA(Asp) + L-aspartate + ATP = L-aspartyl-tRNA(Asp) + AMP + diphosphate. Functionally, catalyzes the attachment of L-aspartate to tRNA(Asp) in a two-step reaction: L-aspartate is first activated by ATP to form Asp-AMP and then transferred to the acceptor end of tRNA(Asp). This Shewanella sediminis (strain HAW-EB3) protein is Aspartate--tRNA ligase.